The sequence spans 116 residues: MPRVKRGNVARKRRKKILKLAKGFRGSHSKLFRTANQQVMKALRNAYRDRRKKKRDFRRLWIVRVNAAARLNGLSYSKLTHQLKKANIEINRKMLAELAVVDPQAFAQVVEVAKSA.

The protein belongs to the bacterial ribosomal protein bL20 family.

In terms of biological role, binds directly to 23S ribosomal RNA and is necessary for the in vitro assembly process of the 50S ribosomal subunit. It is not involved in the protein synthesizing functions of that subunit. In Picosynechococcus sp. (strain ATCC 27264 / PCC 7002 / PR-6) (Agmenellum quadruplicatum), this protein is Large ribosomal subunit protein bL20.